A 310-amino-acid chain; its full sequence is Probable metallo-hydrolase Mb2322c (310 aa).

The interval 1–29 (MVATRGRPCPTNFSRPQRPRVAGNGTKSQ) is disordered. Zn(2+) is bound by residues histidine 137, aspartate 139, aspartate 141, histidine 142, histidine 221, aspartate 242, and histidine 288.

It belongs to the metallo-beta-lactamase superfamily. The cofactor is Zn(2+).

This Mycobacterium bovis (strain ATCC BAA-935 / AF2122/97) protein is Probable metallo-hydrolase Mb2322c.